The chain runs to 634 residues: 1,4-alpha-glucan branching enzyme GlgB (634 aa).

Residue Asp-305 is the Nucleophile of the active site. The active-site Proton donor is the Glu-357.

It belongs to the glycosyl hydrolase 13 family. GlgB subfamily. In terms of assembly, monomer.

It catalyses the reaction Transfers a segment of a (1-&gt;4)-alpha-D-glucan chain to a primary hydroxy group in a similar glucan chain.. It functions in the pathway glycan biosynthesis; glycogen biosynthesis. In terms of biological role, catalyzes the formation of the alpha-1,6-glucosidic linkages in glycogen by scission of a 1,4-alpha-linked oligosaccharide from growing alpha-1,4-glucan chains and the subsequent attachment of the oligosaccharide to the alpha-1,6 position. In Lactiplantibacillus plantarum (strain ATCC BAA-793 / NCIMB 8826 / WCFS1) (Lactobacillus plantarum), this protein is 1,4-alpha-glucan branching enzyme GlgB.